Consider the following 324-residue polypeptide: 4-hydroxy-3-methylbut-2-enyl diphosphate reductase (324 aa).

Cys-28 provides a ligand contact to [4Fe-4S] cluster. His-57 and His-90 together coordinate (2E)-4-hydroxy-3-methylbut-2-enyl diphosphate. The dimethylallyl diphosphate site is built by His-57 and His-90. 2 residues coordinate isopentenyl diphosphate: His-57 and His-90. Cys-112 provides a ligand contact to [4Fe-4S] cluster. His-140 is a binding site for (2E)-4-hydroxy-3-methylbut-2-enyl diphosphate. His-140 serves as a coordination point for dimethylallyl diphosphate. His-140 contacts isopentenyl diphosphate. Glu-142 (proton donor) is an active-site residue. Position 180 (Thr-180) interacts with (2E)-4-hydroxy-3-methylbut-2-enyl diphosphate. Position 210 (Cys-210) interacts with [4Fe-4S] cluster. (2E)-4-hydroxy-3-methylbut-2-enyl diphosphate is bound by residues Ser-238, Ser-239, Asn-240, and Ser-282. Dimethylallyl diphosphate contacts are provided by Ser-238, Ser-239, Asn-240, and Ser-282. 4 residues coordinate isopentenyl diphosphate: Ser-238, Ser-239, Asn-240, and Ser-282.

The protein belongs to the IspH family. The cofactor is [4Fe-4S] cluster.

The enzyme catalyses isopentenyl diphosphate + 2 oxidized [2Fe-2S]-[ferredoxin] + H2O = (2E)-4-hydroxy-3-methylbut-2-enyl diphosphate + 2 reduced [2Fe-2S]-[ferredoxin] + 2 H(+). It catalyses the reaction dimethylallyl diphosphate + 2 oxidized [2Fe-2S]-[ferredoxin] + H2O = (2E)-4-hydroxy-3-methylbut-2-enyl diphosphate + 2 reduced [2Fe-2S]-[ferredoxin] + 2 H(+). Its pathway is isoprenoid biosynthesis; dimethylallyl diphosphate biosynthesis; dimethylallyl diphosphate from (2E)-4-hydroxy-3-methylbutenyl diphosphate: step 1/1. It functions in the pathway isoprenoid biosynthesis; isopentenyl diphosphate biosynthesis via DXP pathway; isopentenyl diphosphate from 1-deoxy-D-xylulose 5-phosphate: step 6/6. Its function is as follows. Catalyzes the conversion of 1-hydroxy-2-methyl-2-(E)-butenyl 4-diphosphate (HMBPP) into a mixture of isopentenyl diphosphate (IPP) and dimethylallyl diphosphate (DMAPP). Acts in the terminal step of the DOXP/MEP pathway for isoprenoid precursor biosynthesis. This chain is 4-hydroxy-3-methylbut-2-enyl diphosphate reductase, found in Ralstonia nicotianae (strain ATCC BAA-1114 / GMI1000) (Ralstonia solanacearum).